Reading from the N-terminus, the 180-residue chain is MDWPHSLLFLLAISIFLAPSHPRNTKGKRKGQGRPSPLAPGPHQVPLDLVSRVKPYARMEEYERNLGEMVAQLRNSSEPAKKKCEVNLQLWLSNKRSLSPWGYSINHDPSRIPADLPEARCLCLGCVNPFTMQEDRSMVSVPVFSQVPVRRRLCPQPPRPGPCRQRVVMETIAVGCTCIF.

An N-terminal signal peptide occupies residues M1–P22. The segment at P22 to Q44 is disordered. Positions R23–Q32 are enriched in basic residues. N75 is a glycosylation site (N-linked (GlcNAc...) asparagine). 2 disulfides stabilise this stretch: C121–C176 and C126–C178.

Belongs to the IL-17 family.

It localises to the secreted. Its function is as follows. Stimulates the release of tumor necrosis factor alpha and IL-1-beta from the monocytic cell line THP-1. The polypeptide is Interleukin-17B (Il17b) (Mus musculus (Mouse)).